The primary structure comprises 529 residues: Peptide chain release factor 3 (529 aa).

Positions Ala11 to Met280 constitute a tr-type G domain. Residues Ser20 to Thr27, Asp88 to His92, and Asn142 to Asp145 contribute to the GTP site.

The protein belongs to the TRAFAC class translation factor GTPase superfamily. Classic translation factor GTPase family. PrfC subfamily.

It is found in the cytoplasm. Functionally, increases the formation of ribosomal termination complexes and stimulates activities of RF-1 and RF-2. It binds guanine nucleotides and has strong preference for UGA stop codons. It may interact directly with the ribosome. The stimulation of RF-1 and RF-2 is significantly reduced by GTP and GDP, but not by GMP. This Enterobacter sp. (strain 638) protein is Peptide chain release factor 3.